We begin with the raw amino-acid sequence, 409 residues long: Elongation factor Tu, plastid (409 aa).

Residues 10–214 form the tr-type G domain; that stretch reads KPHINIGTIG…SVDSYIPTPV (205 aa). The segment at 19–26 is G1; the sequence is GHVDHGKT. 19 to 26 contacts GTP; that stretch reads GHVDHGKT. Thr-26 serves as a coordination point for Mg(2+). The interval 60–64 is G2; the sequence is GITIN. The segment at 81-84 is G3; sequence DCPG. GTP-binding positions include 81-85 and 136-139; these read DCPGH and NKED. Residues 136-139 form a G4 region; sequence NKED. Residues 174 to 176 form a G5 region; the sequence is SAL.

It belongs to the TRAFAC class translation factor GTPase superfamily. Classic translation factor GTPase family. EF-Tu/EF-1A subfamily.

Its subcellular location is the plastid. It carries out the reaction GTP + H2O = GDP + phosphate + H(+). Its function is as follows. GTP hydrolase that promotes the GTP-dependent binding of aminoacyl-tRNA to the A-site of ribosomes during protein biosynthesis. In Helicosporidium sp. subsp. Simulium jonesii (Green alga), this protein is Elongation factor Tu, plastid (tufA).